Reading from the N-terminus, the 612-residue chain is Apoptosis-inducing factor 1, mitochondrial (612 aa).

2 short sequence motifs (mitochondrial localization signal) span residues 1 to 30 (MFRCGGLAGAFKQKLVPLVRSVCVQRPKQR) and 62 to 88 (KMDNSVLVLIVGLSTIGAGAYAYKTIK). The transit peptide at 1 to 53 (MFRCGGLAGAFKQKLVPLVRSVCVQRPKQRNRLPGNLFQQWRVPLELQMARQM) directs the protein to the mitochondrion. Propeptides (removed in mature form) lie at residues 54–100 (ASSG…RIMG) and 55–101 (SSGP…IMGL). Residue Lys108 is modified to N6-succinyllysine. Ser115 carries the post-translational modification Phosphoserine. The tract at residues 133–482 (FLLIGGGTAA…KPYWHQSMFW (350 aa)) is FAD-dependent oxidoreductase. FAD contacts are provided by residues 137-141 (GGGTA), 163-164 (ED), Arg171, and Lys176. Trp195 provides a ligand contact to NAD(+). Residue Val232 coordinates FAD. A Glycyl lysine isopeptide (Lys-Gly) (interchain with G-Cter in ubiquitin) cross-link involves residue Lys254. Residue Ser267 is modified to Phosphoserine. Arg284 serves as a coordination point for FAD. Residues 307 to 310 (GGFL), Glu335, and Lys341 contribute to the NAD(+) site. At Ser370 the chain carries Phosphoserine. An N6-acetyllysine modification is found at Lys387. Gly398 contacts NAD(+). Asp437 lines the FAD pocket. Residues 445-450 (KLGRRR) carry the Nuclear localization signal motif. NAD(+) contacts are provided by residues 452 to 453 (EH), Trp482, and Glu492. FAD is bound by residues 453–454 (HH) and Trp482. Polar residues predominate over residues 512-528 (AQDNPKSATEQSGTGIR). The disordered stretch occupies residues 512 to 551 (AQDNPKSATEQSGTGIRSESETESEASEITIPPSDPAVPQ). A Phosphothreonine modification is found at Thr520. 2 positions are modified to phosphoserine: Ser523 and Ser529. NAD(+) is bound at residue Asn582. Lys592 bears the N6-acetyllysine mark.

The protein belongs to the FAD-dependent oxidoreductase family. Monomer (oxidized form). Homodimer (reduced form). Upon reduction with NADH, undergoes dimerization and forms tight, long-lived FADH2-NAD charge transfer complexes (CTC) resistant to oxidation. Also dimerizes with isoform 3 preventing its release from mitochondria. Interacts with XIAP/BIRC4. Interacts (via N-terminus) with EIF3G (via C-terminus). Interacts with PRELID1. Interacts with CHCHD4; the interaction increases in presence of NADH. Interacts with processed form of PARP1 (Poly [ADP-ribose] polymerase 1, processed C-terminus); interaction is mediated with poly-ADP-ribose chains attached to PARP1, promoting translocation into the nucleus. Requires FAD as cofactor. Post-translationally, under normal conditions, a 54-residue N-terminal segment is first proteolytically removed during or just after translocation into the mitochondrial intermembrane space (IMS) by the mitochondrial processing peptidase (MPP) to form the inner-membrane-anchored mature form (AIFmit). During apoptosis, it is further proteolytically processed at amino-acid position 101 leading to the generation of the mature form, which is confined to the mitochondrial IMS in a soluble form (AIFsol). AIFsol is released to the cytoplasm in response to specific death signals, and translocated to the nucleus, where it induces nuclear apoptosis in a caspase-independent manner. In terms of processing, ubiquitination by XIAP/BIRC4 does not lead to proteasomal degradation. Ubiquitination at Lys-254 by XIAP/BIRC4 blocks its ability to bind DNA and induce chromatin degradation, thereby inhibiting its ability to induce cell death.

It localises to the mitochondrion intermembrane space. The protein localises to the mitochondrion inner membrane. Its subcellular location is the cytoplasm. The protein resides in the nucleus. It is found in the perinuclear region. It catalyses the reaction A + NADH + H(+) = AH2 + NAD(+). Functionally, functions both as NADH oxidoreductase and as regulator of apoptosis. In response to apoptotic stimuli, it is released from the mitochondrion intermembrane space into the cytosol and to the nucleus, where it functions as a proapoptotic factor in a caspase-independent pathway. Release into the cytoplasm is mediated upon binding to poly-ADP-ribose chains. The soluble form (AIFsol) found in the nucleus induces 'parthanatos' i.e. caspase-independent fragmentation of chromosomal DNA. Binds to DNA in a sequence-independent manner. Interacts with EIF3G, and thereby inhibits the EIF3 machinery and protein synthesis, and activates caspase-7 to amplify apoptosis. Plays a critical role in caspase-independent, pyknotic cell death in hydrogen peroxide-exposed cells. In contrast, participates in normal mitochondrial metabolism. Plays an important role in the regulation of respiratory chain biogenesis by interacting with CHCHD4 and controlling CHCHD4 mitochondrial import. The protein is Apoptosis-inducing factor 1, mitochondrial (Aifm1) of Rattus norvegicus (Rat).